The following is a 143-amino-acid chain: Polyadenylate-binding protein-interacting protein 2 (143 aa).

Residues 11–21 carry the PAM2-like motif; that stretch reads TLNPNAPVFDP.

The sequence is that of Polyadenylate-binding protein-interacting protein 2 (CID2) from Arabidopsis thaliana (Mouse-ear cress).